We begin with the raw amino-acid sequence, 207 residues long: Cytochrome c biogenesis ATP-binding export protein CcmA (207 aa).

One can recognise an ABC transporter domain in the interval 2-204 (LECENLSCTR…TTIDIRNFNR (203 aa)). Residue 34–41 (GPNGSGKT) participates in ATP binding.

Belongs to the ABC transporter superfamily. CcmA exporter (TC 3.A.1.107) family. As to quaternary structure, the complex is composed of two ATP-binding proteins (CcmA) and two transmembrane proteins (CcmB).

It is found in the cell membrane. The catalysed reaction is heme b(in) + ATP + H2O = heme b(out) + ADP + phosphate + H(+). Functionally, part of the ABC transporter complex CcmAB involved in the biogenesis of c-type cytochromes; once thought to export heme, this seems not to be the case, but its exact role is uncertain. Responsible for energy coupling to the transport system. This Wolbachia pipientis wMel protein is Cytochrome c biogenesis ATP-binding export protein CcmA.